The following is a 378-amino-acid chain: Chaperone protein DnaJ (378 aa).

One can recognise a J domain in the interval 5 to 70 (DYYESLGVAK…QKRAAYDQYG (66 aa)). A CR-type zinc finger spans residues 133–211 (GVTKEIRIPA…CHGHGRVEKS (79 aa)). Positions 146, 149, 163, 166, 185, 188, 199, and 202 each coordinate Zn(2+). 4 CXXCXGXG motif repeats span residues 146–153 (CDVCHGNG), 163–170 (CPTCHGNG), 185–192 (CPHCHGRG), and 199–206 (CVKCHGHG).

It belongs to the DnaJ family. As to quaternary structure, homodimer. It depends on Zn(2+) as a cofactor.

The protein resides in the cytoplasm. Its function is as follows. Participates actively in the response to hyperosmotic and heat shock by preventing the aggregation of stress-denatured proteins and by disaggregating proteins, also in an autonomous, DnaK-independent fashion. Unfolded proteins bind initially to DnaJ; upon interaction with the DnaJ-bound protein, DnaK hydrolyzes its bound ATP, resulting in the formation of a stable complex. GrpE releases ADP from DnaK; ATP binding to DnaK triggers the release of the substrate protein, thus completing the reaction cycle. Several rounds of ATP-dependent interactions between DnaJ, DnaK and GrpE are required for fully efficient folding. Also involved, together with DnaK and GrpE, in the DNA replication of plasmids through activation of initiation proteins. In Pectobacterium carotovorum subsp. carotovorum (strain PC1), this protein is Chaperone protein DnaJ.